The chain runs to 617 residues: Bifunctional TH2 protein, mitochondrial (617 aa).

The N-terminal 28 residues, 1-28 (MRFLFPTRLINNSSLGLLRSPHTTAPIR), are a transit peptide targeting the mitochondrion. Asp-107 contributes to the substrate binding site. The Nucleophile role is filled by Cys-213. Substrate contacts are provided by Tyr-217 and Tyr-244. The active-site Proton donor is Glu-286.

In the N-terminal section; belongs to the TenA family. It in the C-terminal section; belongs to the HAD-like hydrolase superfamily.

The protein localises to the mitochondrion. Its subcellular location is the cytoplasm. The catalysed reaction is thiamine phosphate + H2O = thiamine + phosphate. It carries out the reaction 4-amino-5-aminomethyl-2-methylpyrimidine + H2O = 4-amino-5-hydroxymethyl-2-methylpyrimidine + NH4(+). Its function is as follows. May be involved in the salvage of thiamine breakdown products. This protein has a haloacid dehalogenase family domain fused to its TenA domain. Phosphatase with the highest activity against thiamine monophosphate (ThMP) and, with a lower activity, against thiamine diphosphate (ThDP), flavin mononucleotide, inorganic pyrophosphate, CTP and dATP. Has a thiamine salvage hydrolase activity, but only against 4-amino-5-aminomethyl-2-methylpyrimidine (amino-HMP) and not against N-formylamino-HMP, desthiothiamine, thiamine, ThMP, and ThDP. The protein is Bifunctional TH2 protein, mitochondrial of Arabidopsis thaliana (Mouse-ear cress).